We begin with the raw amino-acid sequence, 94 residues long: MTINYQFGDVDAHGAMIRALAGLLEAEHQAIISDVLTASDFWGGAGSAACQGFITQLGRNFQVIYEQANAHGQKVQAAGNNMAQTDSAVGSSWA.

Belongs to the WXG100 family. ESAT-6 subfamily.

It is found in the secreted. In Mycobacterium tuberculosis (strain CDC 1551 / Oshkosh), this protein is ESAT-6-like protein EsxI.